The sequence spans 181 residues: MEVNKKQLADIFGASIRTIQNWQEQGMPVLRGGGKGNEVLYDSAAVIKWYAERDAEIENEKLRREVEELRQASEADLQPGTIEYERHRLTRAQADAQELKNARDSAEVVETAFCTFVLSRIAGEIASILDGLPLSVQRRFPELENRHVDFLKRDIIKAMNKAAALDELIPGLLSEYIEQSG.

The interval 1 to 29 is winged helix-turn-helix (wHTH); that stretch reads MEVNKKQLADIFGASIRTIQNWQEQGMPV. ATP is bound at residue 31-36; it reads RGGGKG. Residues 52–109 are a coiled coil; it reads ERDAEIENEKLRREVEELRQASEADLQPGTIEYERHRLTRAQADAQELKNARDSAEVV. Residues 110-140 are self-assembly; sequence ETAFCTFVLSRIAGEIASILDGLPLSVQRRF. Residues 141 to 180 form a binding to terminase large subunit region; sequence PELENRHVDFLKRDIIKAMNKAAALDELIPGLLSEYIEQS.

Belongs to the terminase small subunit family. As to quaternary structure, homodimer. Heterotrimer of two small and one large terminase subunits. The catalytically competent terminase is composed of a tetramer of heterotrimers. The tetramer forms a ring structure large enough to encircle duplex DNA. Host IHFA/IHFB induces bending of viral DNA to facilitate the assembly of the terminase tetramer of heterotrimers. Interacts (via C-terminus) with the terminase large subunit (via N-terminus).

Its subcellular location is the host cytoplasm. The catalysed reaction is ATP + H2O = ADP + phosphate + H(+). The small subunit is responsible for the binding to multiple recognition elements within the packaging initiation site cos. The terminase lies at a unique vertex of the procapsid and is composed of two subunits, a small terminase subunit involved in viral DNA recognition (binding to packaging sequence cos), and a large terminase subunit possessing endonucleolytic and ATPase activities (DNA maturation and packaging). The terminase binds, cooperatively with the host factor IHFA/IHFB, to the cos site at the junction of adjacent viral genomes in the concatemeric DNA. The endonuclease activity of the large subunit cleave the viral DNA generating 5'overhangs of 12 bp in length. The terminase remains bound to the left end of the genome to be packaged, forming a stable DNA-terminase complex. In a reaction facilitated by the viral assembly catalyst gpFI, the DNA-terminase complex binds to the portal of the procapsid and the terminase packages the viral DNA into the procapsid until the next cos site on the concatemer reaches the complex ('unit length' packaging). The downstream cos site is then cut generating the mature right end of the genome, the heterotrimer undocks from the DNA-filled head and remains bound to the left end of concatemer's next genome. The protein is Terminase small subunit (Nu1) of Escherichia phage lambda (Bacteriophage lambda).